A 361-amino-acid chain; its full sequence is MYIKAIMLANYRNYNNLELNLSEGVNVFIGDNAQGKTNVLESIYYCAFAKSHRTSRDKDLINWKENEAYISLLVGKKRLDKRIDIKILRDGKKAIKVNSIKINKIGELFGTFNVVMFSPEDLKIIKESPGIRRKFLDMELCQISKKYYFNLVQYNKILNERNVILRSRDFNKDILEVYDLQLVECADYIVKERLEYIDKINYYGKFIHNEITSGKEDIVFKYDSGIKFKDDFKYAFLEKLKNNLLRDREQGITSIGPHRDDFNVLINNIDVKKFGSQGQQRTAVLTMKFSSLKIIKEITKEYPILLLDDVLSELDINRKRYVLSTLNDIQTIITCTGINDLEDYLDDKSKVFKVCNGEIVN.

Position 30 to 37 (30 to 37 (GDNAQGKT)) interacts with ATP.

The protein belongs to the RecF family.

It is found in the cytoplasm. Functionally, the RecF protein is involved in DNA metabolism; it is required for DNA replication and normal SOS inducibility. RecF binds preferentially to single-stranded, linear DNA. It also seems to bind ATP. The sequence is that of DNA replication and repair protein RecF from Clostridium botulinum (strain Eklund 17B / Type B).